The following is a 623-amino-acid chain: uncharacterized protein (623 aa).

The span at Leu-157–Gln-166 shows a compositional bias: basic and acidic residues. The segment at Leu-157–Ile-237 is disordered. A compositionally biased stretch (polar residues) spans Glu-167–Leu-177. A compositionally biased stretch (low complexity) spans Ala-193 to Ala-210.

This is an uncharacterized protein from Macaca fascicularis (Crab-eating macaque).